Reading from the N-terminus, the 467-residue chain is Argininosuccinate lyase (467 aa).

It belongs to the lyase 1 family. Argininosuccinate lyase subfamily.

It localises to the cytoplasm. The enzyme catalyses 2-(N(omega)-L-arginino)succinate = fumarate + L-arginine. Its pathway is amino-acid biosynthesis; L-arginine biosynthesis; L-arginine from L-ornithine and carbamoyl phosphate: step 3/3. This is Argininosuccinate lyase from Nitrosococcus oceani (strain ATCC 19707 / BCRC 17464 / JCM 30415 / NCIMB 11848 / C-107).